We begin with the raw amino-acid sequence, 955 residues long: Protein translocase subunit SecA (955 aa).

ATP is bound by residues glutamine 87, 105 to 109 (GEGKT), and aspartate 494. Residues 861-955 (ASPAPAAPRP…KKAPRTKRKR (95 aa)) form a disordered region. A compositionally biased stretch (low complexity) spans 874-888 (QEAAQQAQGTAAPSA). The segment covering 943–955 (SKGKKAPRTKRKR) has biased composition (basic residues).

Belongs to the SecA family. Monomer and homodimer. Part of the essential Sec protein translocation apparatus which comprises SecA, SecYEG and auxiliary proteins SecDF. Other proteins may also be involved.

It is found in the cell membrane. It localises to the cytoplasm. The enzyme catalyses ATP + H2O + cellular proteinSide 1 = ADP + phosphate + cellular proteinSide 2.. In terms of biological role, part of the Sec protein translocase complex. Interacts with the SecYEG preprotein conducting channel. Has a central role in coupling the hydrolysis of ATP to the transfer of proteins into and across the cell membrane, serving as an ATP-driven molecular motor driving the stepwise translocation of polypeptide chains across the membrane. This chain is Protein translocase subunit SecA, found in Rhodococcus jostii (strain RHA1).